Reading from the N-terminus, the 79-residue chain is Probable [Fe-S]-dependent transcriptional repressor (79 aa).

Cysteine 56, cysteine 61, cysteine 64, and cysteine 71 together coordinate iron-sulfur cluster.

It belongs to the FeoC family.

In terms of biological role, may function as a transcriptional regulator that controls feoABC expression. The polypeptide is Probable [Fe-S]-dependent transcriptional repressor (Klebsiella pneumoniae subsp. pneumoniae (strain ATCC 700721 / MGH 78578)).